The following is a 329-amino-acid chain: Fructose-1,6-bisphosphatase class 1 2 (329 aa).

Positions 92, 111, 113, and 114 each coordinate Mg(2+). Substrate-binding positions include 114-117 (DGSS) and Asn206. Residue Glu278 coordinates Mg(2+).

This sequence belongs to the FBPase class 1 family. In terms of assembly, homotetramer. The cofactor is Mg(2+).

The protein localises to the cytoplasm. It catalyses the reaction beta-D-fructose 1,6-bisphosphate + H2O = beta-D-fructose 6-phosphate + phosphate. The protein operates within carbohydrate biosynthesis; gluconeogenesis. The chain is Fructose-1,6-bisphosphatase class 1 2 from Xanthobacter autotrophicus (strain ATCC BAA-1158 / Py2).